Here is a 275-residue protein sequence, read N- to C-terminus: MPPLVFDIDHIKLLRKWGICGVLSGTLPTAAQQNVFLSVPLRLMLEDVLWLHLNNLADVKLIRQEGDEIMEGITLERGAKLSKIVNDRLNKSFEYQRKFKKDEHIAKLKKIGRINDKTTAEELQRLDKSSNNDQLIESSLFIDIANTSMILRDIRSDSDSLSRDDISDLLFKQYRQAGKMQTYFLYKALRDQGYVLSPGGRFGGKFIAYPGDPLRFHSHLTIQDAIDYHNEPIDLISMISGARLGTTVKKLWVIGGVAEETKETHFFSIEWAGFG.

Residues Tyr209, His217, and Lys250 contribute to the active site.

The protein belongs to the tRNA-intron endonuclease family. Heterotetramer composed of SEN2, SEN15, SEN34 and SEN54. Interacts directly with SEN15.

The protein localises to the nucleus. It is found in the endomembrane system. It localises to the mitochondrion outer membrane. The catalysed reaction is pretRNA = a 3'-half-tRNA molecule with a 5'-OH end + a 5'-half-tRNA molecule with a 2',3'-cyclic phosphate end + an intron with a 2',3'-cyclic phosphate and a 5'-hydroxyl terminus.. Its function is as follows. Constitutes one of the two catalytic subunit of the tRNA-splicing endonuclease complex, a complex responsible for identification and cleavage of the splice sites in pre-tRNA. It cleaves pre-tRNA at the 5'- and 3'-splice sites to release the intron. The products are an intron and two tRNA half-molecules bearing 2',3'-cyclic phosphate and 5'-OH termini. There are no conserved sequences at the splice sites, but the intron is invariably located at the same site in the gene, placing the splice sites an invariant distance from the constant structural features of the tRNA body. It probably carries the active site for 3'-splice site cleavage. This is tRNA-splicing endonuclease subunit SEN34 (SEN34) from Saccharomyces cerevisiae (strain ATCC 204508 / S288c) (Baker's yeast).